A 1403-amino-acid polypeptide reads, in one-letter code: Sushi, nidogen and EGF-like domain-containing protein 1 (1403 aa).

A signal peptide spans 1–24 (MRRGAAWALLLAAALGLGARGVRA). The 156-residue stretch at 103-258 (AFWADVDNRR…GRWAFRIDDA (156 aa)) folds into the NIDO domain. EGF-like domains lie at 268-309 (TTSV…RRCH), 311-347 (DVNECASHPCQNGGTCTHGVNSFSCQCPAGFQGPTCE), and 349-385 (AQSPCDNKVCQNGGQCQAESSSAVCVCQAGYTGATCE). Disulfide bonds link C272/C284, C278/C297, C299/C308, C315/C326, C320/C335, C337/C346, C353/C364, C358/C373, C375/C384, C391/C402, C396/C411, C413/C422, C433/C444, C438/C453, C455/C464, C472/C480, C474/C488, and C490/C499. A glycan (N-linked (GlcNAc...) asparagine) is linked at N292. The 37-residue stretch at 387–423 (DVDECSSDPCLNGGSCVDLVGNYSCICVEPFEGPQCE) folds into the EGF-like 4; calcium-binding domain. A glycan (N-linked (GlcNAc...) asparagine) is linked at N408. 2 EGF-like domains span residues 429-465 (VPSPCLSNPCLNGGTCVDADQGYVCECPEGFMGLDCR) and 468-500 (ILNDCDCRNGGRCLGANTTICQCPPGFFGLLCE). N-linked (GlcNAc...) asparagine glycosylation occurs at N484. N536 is a glycosylation site (N-linked (GlcNAc...) asparagine). 4 EGF-like domains span residues 541-577 (LPSPCDSDPCFNGGSCDAHEDSYTCECPRGFHGRHCE), 580-616 (RPHLCSSGPCRNGGTCKETGDEYRCTCPYRFTGRHCE), 619-655 (KPDSCASGPCHNGGTCFHYIGKYKCDCPPGFSGRHCE), and 657-693 (APSPCFRSPCMNGGICEDLGTDFSCHCQPGYTGHRCQ). Disulfide bonds link C545–C556, C550–C565, C567–C576, C584–C595, C589–C604, C606–C615, C623–C634, C628–C643, C645–C654, C661–C672, C666–C681, C683–C692, C698–C739, C724–C751, C757–C768, C762–C777, C779–C788, C795–C806, C800–C815, C817–C826, C833–C844, C838–C853, C855–C864, C871–C882, C876–C891, and C893–C902. The Sushi domain maps to 696-753 (VDCGQPEEVKHATMRLNGTRMGSVALYTCDPGFSLSVLSHMRVCQPQGVWSQPPQCIE). An N-linked (GlcNAc...) asparagine glycan is attached at N712. The region spanning 753–789 (EVDECQSQPCLHKGSCQDLIAGYQCLCSPGYEGVHCE) is the EGF-like 11; calcium-binding domain. The 37-residue stretch at 791–827 (ETDECQAQPCRNGGSCRDLPGAFICQCPEGFVGTHCE) folds into the EGF-like 12; calcium-binding domain. 2 EGF-like domains span residues 829–865 (EVDACASSPCQHGGRCEDGGGAYLCVCPEGFFGYNCE) and 867–903 (VSDPCFSSPCGGRGYCLASNGSHSCTCKVGYTGKDCT). N-linked (GlcNAc...) asparagine glycosylation occurs at N886. 3 Fibronectin type-III domains span residues 908-1006 (PPTA…TRPR), 1007-1105 (PIED…TRPL), and 1106-1200 (PPAN…SPRD). 5 N-linked (GlcNAc...) asparagine glycosylation sites follow: N977, N1015, N1109, N1139, and N1298. The disordered stretch occupies residues 1295-1314 (LPKNNSKDTESTPGSCSEDT). Residues 1305-1314 (STPGSCSEDT) show a composition bias toward polar residues. Residues 1306-1342 (TPGSCSEDTCQNGGTCVPGANAHSCDCRPGFKGRHCE) form the EGF-like 15 domain. 3 disulfides stabilise this stretch: C1310–C1321, C1315–C1330, and C1332–C1341.

In terms of processing, phosphorylated on serine and threonine residues. N-glycosylated. As to expression, expressed in liver.

The protein resides in the secreted. Its subcellular location is the extracellular space. It is found in the extracellular matrix. This chain is Sushi, nidogen and EGF-like domain-containing protein 1, found in Rattus norvegicus (Rat).